We begin with the raw amino-acid sequence, 1429 residues long: Inactive rhomboid protein 1 (1429 aa).

3 disordered regions span residues 1-36 (MSSN…STRR), 560-579 (GNED…PDRP), and 740-766 (TSAL…QPGA). Topologically, residues 1-843 (MSSNGSDLGH…RPFFTYWINT (843 aa)) are cytoplasmic. Positions 22 to 33 (SVHSSMRGSMSS) are enriched in low complexity. 2 stretches are compositionally biased toward polar residues: residues 564–573 (AGQSNGTNGN) and 740–763 (TSAL…SSHQ). Residues 844–864 (VQVVVLILSIICYGIAPIGIG) traverse the membrane as a helical segment. Topologically, residues 865 to 1099 (SEQKTGQVLV…PDQLYRLLTS (235 aa)) are lumenal. A helical transmembrane segment spans residues 1100–1120 (LCMHAGILHLAITLIFQHLFL). Topologically, residues 1121-1131 (ADLERLIGTVR) are cytoplasmic. The helical transmembrane segment at 1132–1152 (TAIVYIMSGFAGNLTSAILVP) threads the bilayer. Topologically, residues 1153–1156 (HRPE) are lumenal. Residues 1157 to 1177 (VGPSASLSGVVASLIALLVWM) traverse the membrane as a helical segment. Over 1178–1186 (HWKYLHKPH) the chain is Cytoplasmic. A helical membrane pass occupies residues 1187–1207 (IALFKLLLLCSVLVGIGTLPY). Residues 1208-1210 (QLN) are Lumenal-facing. A helical membrane pass occupies residues 1211 to 1231 (FLGLLAGVICGCLLTMSLVPF). Residues 1232–1245 (TTFSKYGRKKKINL) lie on the Cytoplasmic side of the membrane. The chain crosses the membrane as a helical span at residues 1246 to 1266 (IWTCVLFHVVVYTAMIVTFYI). At 1267-1429 (HPSEFHSISF…INNNTEFNVL (163 aa)) the chain is on the lumenal side.

This sequence belongs to the peptidase S54 family. Specifically expressed in the nervous system and in brain.

The protein localises to the endoplasmic reticulum membrane. Functionally, rhomboid protease-like protein which has no protease activity but regulates the secretion of several ligands of the epidermal growth factor receptor. Indirectly activates the epidermal growth factor receptor signaling pathway and may thereby regulate sleep, cell survival, proliferation and migration. This is Inactive rhomboid protein 1 (rho-5) from Drosophila melanogaster (Fruit fly).